The following is a 295-amino-acid chain: Putative aquaporin-12B (295 aa).

At 1–22 (MAGLNVSLSFFFATFTLCEAAR) the chain is on the cytoplasmic side. The helical transmembrane segment at 23–41 (RASKALLPVGAYEVFAREA) threads the bilayer. The Extracellular portion of the chain corresponds to 42 to 55 (MRTLVELGPWAGDF). A helical membrane pass occupies residues 56–74 (GPDLLLTLLFLLFLAHGVT). The Cytoplasmic portion of the chain corresponds to 75–76 (LD). Positions 77–114 (GASANPTVSLQEFLMAEESLPGTLLKLAAQGLGMQAAC) form an intramembrane region, discontinuously helical. An NPA 1 motif is present at residues 81 to 83 (NPT). Over 115 to 120 (TLTRLC) the chain is Cytoplasmic. A helical membrane pass occupies residues 121–142 (WAWELSDLHLLQSLMAQSCSSA). Over 143-145 (LRT) the chain is Extracellular. Residues 146–166 (SVPHGALVEAACAFCFHLTLL) form a helical membrane-spanning segment. Over 167–174 (HLRHSPPA) the chain is Cytoplasmic. A helical membrane pass occupies residues 175-191 (YSGPAVALLVTVTAYTA). Residues 192 to 194 (GPF) are Extracellular-facing. Positions 195–206 (TSAFFNPALAAS) form an intramembrane region, discontinuously helical. The NPA 2 signature appears at 200-202 (NPA). At 207-223 (VTFACSGHTLLEYVQVY) the chain is on the extracellular side. The chain crosses the membrane as a helical span at residues 224–244 (WLGPLTGMVLAVLLHQGRLPH). Residues 245-295 (LFQRNLFYGQKNKYRAPRGKPAPASGDTQTPAKGSSVREPGRSGVEGPHSS) lie on the Cytoplasmic side of the membrane. Residues 257–295 (KYRAPRGKPAPASGDTQTPAKGSSVREPGRSGVEGPHSS) are disordered.

The protein belongs to the MIP/aquaporin (TC 1.A.8) family. AQP11/AQP12 subfamily. As to quaternary structure, homotetramer; each monomer provides an independent water pore.

It is found in the membrane. It carries out the reaction H2O(in) = H2O(out). Its function is as follows. Putative aquaporin. Could form homotetrameric transmembrane channels, with each monomer independently mediating water transport across the plasma membrane along its osmotic gradient. This chain is Putative aquaporin-12B, found in Homo sapiens (Human).